A 398-amino-acid polypeptide reads, in one-letter code: tRNA pseudouridine synthase D (398 aa).

Residue D76 is the Nucleophile of the active site. Residues 151 to 361 enclose the TRUD domain; the sequence is GVPNRFGVQR…MEGERRPLRV (211 aa).

It belongs to the pseudouridine synthase TruD family.

The catalysed reaction is uridine(13) in tRNA = pseudouridine(13) in tRNA. Its function is as follows. Responsible for synthesis of pseudouridine from uracil-13 in transfer RNAs. In Geobacter sp. (strain M21), this protein is tRNA pseudouridine synthase D.